We begin with the raw amino-acid sequence, 22 residues long: 65 kDa membrane protein (22 aa).

Residues 1-22 (AAKPLDKSSSSLHHGYSKVHVP) are disordered.

It localises to the cell membrane. Binds various plasma and ECM-proteins. The protein is 65 kDa membrane protein of Staphylococcus aureus.